A 226-amino-acid chain; its full sequence is Lipoprotein-releasing system ATP-binding protein LolD (226 aa).

The region spanning 6-226 (LSVEQVSKSF…QLQQGSLIRI (221 aa)) is the ABC transporter domain. An ATP-binding site is contributed by 42–49 (GESGCGKS).

Belongs to the ABC transporter superfamily. Lipoprotein translocase (TC 3.A.1.125) family. In terms of assembly, the complex is composed of two ATP-binding proteins (LolD) and two transmembrane proteins (LolC and LolE).

The protein resides in the cell inner membrane. Functionally, part of the ABC transporter complex LolCDE involved in the translocation of mature outer membrane-directed lipoproteins, from the inner membrane to the periplasmic chaperone, LolA. Responsible for the formation of the LolA-lipoprotein complex in an ATP-dependent manner. This chain is Lipoprotein-releasing system ATP-binding protein LolD, found in Treponema pallidum (strain Nichols).